The sequence spans 457 residues: TnpB-like protein ORF457 (457 aa).

A disordered region spans residues 1–22; the sequence is MPPSSGQLLGDEEREPTSTPAI.

This sequence in the N-terminal section; belongs to the transposase 2 family. The protein in the C-terminal section; belongs to the transposase 35 family.

This Acidianus two-tailed virus (ATV) protein is TnpB-like protein ORF457.